The sequence spans 155 residues: uncharacterized protein (155 aa).

The span at 28-38 (KKGKDRPREDG) shows a compositional bias: basic and acidic residues. The interval 28-52 (KKGKDRPREDGTQQQPSESKGEAAC) is disordered.

This is an uncharacterized protein from Dryophytes versicolor (chameleon treefrog).